The following is a 74-amino-acid chain: MKTSSLTIIFIAVIITIICLNIHDIEAREIEFNAGRVVRSEKDCIKHLQRCRENKDCCSKKCSRRGTNPEKRCR.

The N-terminal stretch at 1–27 (MKTSSLTIIFIAVIITIICLNIHDIEA) is a signal peptide. A propeptide spanning residues 28–39 (REIEFNAGRVVR) is cleaved from the precursor. Intrachain disulfides connect cysteine 44/cysteine 58, cysteine 51/cysteine 62, and cysteine 57/cysteine 73. Residues 64–65 (RR) are essential for stimulation of [3H]ryanodine binding to RYR1.

Expressed by the venom gland.

Its subcellular location is the secreted. In terms of biological role, this toxin activates ryanodine receptors RyR1 and RyR2 by inducing a long-lasting subconductance state (35% of the full conductance stateon RyR1). Furthermore, it triggers calcium release from sarcoplasmic vesicles (11.8 nM are enough to induce a sharp release on RyR1, and 55% of the total calcium is released after toxin (100 nM) addition on RyR1) probably by acting as a cell-penetrating peptide (CPP). In addition, it has been shown to dose-dependently stimulate ryanodine binding to RyR1 (EC(50)=14.8 nM). It also augments the bell-shaped calcium-[3H]ryanodine binding curve that is maximal at about 10 uM calcium concentration. It binds a different site as ryanodine. It acts synergistically with caffeine. In vivo, intracerebroventricular injection into mice induces neurotoxic symptoms, followed by death. The sequence is that of Hadrucalcin from Hoffmannihadrurus gertschi (Scorpion).